We begin with the raw amino-acid sequence, 231 residues long: MATVSLPCTAVLIDLDGTLVDCAPDIVEAANRMLADLGSPALPFGTVAGFIGRGVPNLVRRVLETAQLAPRVDATDAVAMFHRHYADTNGRLGSVFPGVEAGLAALRRQGYRLACVTNKPRALAVPLLALTGLSQYLEVLVAGDSIAQMKPDPEPLRHACNLLDVDAAQGVLVGDSAVDVAAARAAGIPVCLVRYGYAGPGGPAALGADALVDSLEALPALLTPARLAPAA.

D14 acts as the Nucleophile in catalysis. Residues D14, D16, and D175 each contribute to the Mg(2+) site.

The protein belongs to the HAD-like hydrolase superfamily. CbbY/CbbZ/Gph/YieH family. As to quaternary structure, homotrimer. Mg(2+) is required as a cofactor.

It catalyses the reaction 2-phosphoglycolate + H2O = glycolate + phosphate. The protein operates within organic acid metabolism; glycolate biosynthesis; glycolate from 2-phosphoglycolate: step 1/1. Specifically catalyzes the dephosphorylation of 2-phosphoglycolate. Is involved in the dissimilation of the intracellular 2-phosphoglycolate formed during the DNA repair of 3'-phosphoglycolate ends, a major class of DNA lesions induced by oxidative stress. The protein is Phosphoglycolate phosphatase, plasmid (cbbZP) of Cupriavidus necator (strain ATCC 17699 / DSM 428 / KCTC 22496 / NCIMB 10442 / H16 / Stanier 337) (Ralstonia eutropha).